The chain runs to 341 residues: HTH-type transcriptional repressor PurR (341 aa).

The HTH lacI-type domain occupies 2–56 (ATIKDVAKRANVSTTTVSHVINKTRFVAEETRNAVWAAIKELHYSPSAVARSLKV). A DNA-binding region (H-T-H motif) is located at residues 4–23 (IKDVAKRANVSTTTVSHVIN). Residues 48–56 (SAVARSLKV) mediate DNA binding. Positions 73, 190, 192, 221, and 275 each coordinate hypoxanthine.

In terms of assembly, homodimer.

It participates in purine metabolism; purine nucleotide biosynthesis [regulation]. In terms of biological role, is the main repressor of the genes involved in the de novo synthesis of purine nucleotides, regulating purB, purC, purEK, purF, purHD, purL, purMN and guaBA expression. PurR is allosterically activated to bind its cognate DNA by binding the purine corepressors, hypoxanthine or guanine, thereby effecting transcription repression. This chain is HTH-type transcriptional repressor PurR, found in Shigella sonnei (strain Ss046).